The chain runs to 106 residues: Urease subunit beta (106 aa).

This sequence belongs to the urease beta subunit family. In terms of assembly, heterotrimer of UreA (gamma), UreB (beta) and UreC (alpha) subunits. Three heterotrimers associate to form the active enzyme. The apoenzyme interacts with an accessory complex composed of UreD, UreF and UreG, which is required for the assembly of the nickel containing metallocenter of UreC. The UreE protein may also play a direct role as a metallochaperone in nickel transfer to the urease apoprotein.

It is found in the cytoplasm. The enzyme catalyses urea + 2 H2O + H(+) = hydrogencarbonate + 2 NH4(+). It participates in nitrogen metabolism; urea degradation; CO(2) and NH(3) from urea (urease route): step 1/1. With respect to regulation, the apoenzyme can be activated in vitro in the presence of nickel ions and carbon dioxide, which promotes carboxylation of 'Lys-217' of the UreC (alpha) subunit. The sequence is that of Urease subunit beta from Klebsiella aerogenes (Enterobacter aerogenes).